The chain runs to 446 residues: Dimethylsulfoniopropionate lyase DddP (446 aa).

The segment covering 1-13 (MNQHYSETRKIDP) has biased composition (basic and acidic residues). The tract at residues 1–30 (MNQHYSETRKIDPSRGATLGDNTPNDNNRI) is disordered. Aspartate 295, aspartate 297, aspartate 307, histidine 371, glutamate 406, and glutamate 421 together coordinate a divalent metal cation.

Belongs to the peptidase M24B family. Homodimer. A divalent metal cation is required as a cofactor.

It catalyses the reaction S,S-dimethyl-beta-propiothetin = acrylate + dimethyl sulfide + H(+). Functionally, able to cleave dimethylsulfoniopropionate (DMSP), releasing dimethyl sulfide (DMS). DMS is the principal form by which sulfur is transported from oceans to the atmosphere. The real activity of the protein is however subject to debate and it is unclear whether it constitutes a real dimethylsulfoniopropionate lyase in vivo: the low activity with DMSP as substrate suggests that DMSP is not its native substrate. The sequence is that of Dimethylsulfoniopropionate lyase DddP from Roseovarius nubinhibens (strain ATCC BAA-591 / DSM 15170 / ISM).